We begin with the raw amino-acid sequence, 367 residues long: Quinolinate synthase (367 aa).

Positions 45 and 62 each coordinate iminosuccinate. Cysteine 109 provides a ligand contact to [4Fe-4S] cluster. Iminosuccinate is bound by residues 140–142 and serine 161; that span reads YVN. Cysteine 229 contacts [4Fe-4S] cluster. Iminosuccinate contacts are provided by residues 255-257 and threonine 272; that span reads HPE. Cysteine 319 provides a ligand contact to [4Fe-4S] cluster.

It belongs to the quinolinate synthase family. Type 3 subfamily. It depends on [4Fe-4S] cluster as a cofactor.

Its subcellular location is the cytoplasm. The enzyme catalyses iminosuccinate + dihydroxyacetone phosphate = quinolinate + phosphate + 2 H2O + H(+). The protein operates within cofactor biosynthesis; NAD(+) biosynthesis; quinolinate from iminoaspartate: step 1/1. Catalyzes the condensation of iminoaspartate with dihydroxyacetone phosphate to form quinolinate. This is Quinolinate synthase from Geobacillus thermodenitrificans (strain NG80-2).